Consider the following 949-residue polypeptide: MNLGDGLKLETELLDGKTKLILSPYEHKSKISVKMGNKAKIAKCPLRTKTGHILKSTQDTCIGSEKLLQKKTVGSETSQAKGEKNGMTFSSTKDLCKQCIDKDCLHIQKEISPATPNMQKTRNTVNTSLVGKQKPHKKHITAENMKSNLVCLTQEQLQQILMTVNQGNRSLSLTENGKEAKSQYSLHLNSISNQPKDENIMGLFKKTEMVSSVPAENKSVLNEHQETSKQCEQKIAIENEWKPADIFSTLGERERDRSLLEAKKAQWRKELDEQVALKKKEKEVSEKWNDPWKKSESDKIIWEKHQILDQSRETVLLEHAFSAVKQELQRKWIEELNKQIEDDRQRKIEEKIIYSKGEEHDRWAMHFDSLKSYPGSQSQLSSRSTHKQPEYFCVSPDTQELADVSSVCTPTTGSQVEPSEEEHIAKPIKDVVMANSKKTNFLRSMTALLDPAQIEERDRRRQKQLEHQKAITAQVEEKCRKKQLEEEQRKKEEQEEELRLAQEREEMQKQYEEDILKQKQKEEIMTLKTNELFQTMQRAQELAQRLKQEQRIRELAQKGHDTSRLIKNLGVDTIQIEYNASNISNSRHDSDEVSGKMNTYMNSTTSPKKDTGVQTDDLNIGIFTNAESHCGSLMERDITNCSSPEISAELIGQFSTKKNKQELTQDKGASLEKENNRCNDQCNQFTRIDKQTKHMKKYPKRPDWNINKPPKRYIPASEKYPKQLQKQREEKEVRRQMELLHLVEKNNPGHLSQNRGISPEIFHSSHQETESKFRWHLVKKEEEPLNIHSFSKERSPSSPVPAVKNRTQQTQNTLHLPLKNSSYERENLISGGNQTELSSGISESSHFIPYVRTNEIYYLDPDAPLSGPSTQDPQYQNSQDCGQERQLFDSDCVRDPLLNPNMVKNRDRQQAILKGLSELRQGLLQKQKELESSLLPLAENQEENFGSSF.

Residues T115 and T121 each carry the phosphothreonine modification. Residue S369 is modified to Phosphoserine. Positions Q474–K558 form a coiled coil. The segment at G570–F949 is mediates localization to cilia, centrosomes and spindle microtubules and the interaction with PCM1, CEP290, CEP104 and CSPP1. S606 carries the phosphoserine modification. Disordered stretches follow at residues Q691–I714 and S789–Q809.

Homodimer; disulfide-linked. Interacts with CEP290. Interacts with PCM1. Interacts with ARMC9, TOGARAM1, CSPP1 and CEP104. Interacts with CDK5RAP2, CEP152, CEP192, TBG1 and PRC1.

Its subcellular location is the cytoplasm. The protein resides in the cytoskeleton. It localises to the microtubule organizing center. The protein localises to the centrosome. It is found in the centriolar satellite. Its subcellular location is the cell projection. The protein resides in the cilium. It localises to the cilium basal body. The protein localises to the cilium axoneme. It is found in the photoreceptor inner segment. Its subcellular location is the photoreceptor outer segment. Functionally, microtubule-binding protein required for ciliogenesis. May function in ciliogenesis by mediating the transport of proteins like BBS4 to the cilium, but also through the organization of the centriolar satellites. Required for the assembly of signaling-competent cilia with proper structure and length. Mediates this function in part by regulating transition zone assembly and basal body recruitment of the IFT-B complex. Cooperates with the ciliopathy proteins CSPP1 and CEP104 during cilium length regulation. Plays two important roles during cell division. First, is required for mitotic progression via regulation of spindle assembly, organization and orientation, levels of spindle microtubules (MTs), kinetochore-fiber integrity, and chromosome alignment. Second, functions during cytokinesis in part by regulating assembly and organization of central spindle and midbody MTs Plays a role in retina morphogenesis and/or homeostasis. This Pongo abelii (Sumatran orangutan) protein is Coiled-coil domain-containing protein 66.